The following is a 144-amino-acid chain: Sentan (144 aa).

The disordered stretch occupies residues 1–31 (MCGCRASVPSTKHYSVNPAPTTRSPPAAAGM). Residues 18–29 (PAPTTRSPPAAA) are compositionally biased toward low complexity.

This sequence belongs to the S-100 family.

Its subcellular location is the cell projection. The protein localises to the cilium. May be a component of the linker structure that bridges the ciliary membrane and peripheral singlet microtubules. The chain is Sentan from Gallus gallus (Chicken).